Reading from the N-terminus, the 346-residue chain is [LysW]-lysine/[LysW]-ornithine hydrolase (346 aa).

Residue histidine 68 coordinates Zn(2+). Aspartate 70 is a catalytic residue. Residue aspartate 92 coordinates Zn(2+). Glutamate 122 serves as the catalytic Proton acceptor. The Zn(2+) site is built by glutamate 123, glutamate 146, and histidine 317.

Belongs to the peptidase M20A family. LysK subfamily. It depends on Zn(2+) as a cofactor. Co(2+) is required as a cofactor.

It localises to the cytoplasm. It carries out the reaction [amino-group carrier protein]-C-terminal-gamma-(L-lysyl)-L-glutamate + H2O = [amino-group carrier protein]-C-terminal-L-glutamate + L-lysine. The catalysed reaction is [amino-group carrier protein]-C-terminal-gamma-(L-ornithyl)-L-glutamate + H2O = [amino-group carrier protein]-C-terminal-L-glutamate + L-ornithine. It participates in amino-acid biosynthesis; L-lysine biosynthesis via AAA pathway; L-lysine from L-alpha-aminoadipate (Thermus route): step 5/5. Its pathway is amino-acid biosynthesis; L-arginine biosynthesis. Its function is as follows. Catalyzes the release of L-lysine from [LysW]-gamma-L-lysine and the release of L-ornithine from [LysW]-L-ornithine. The chain is [LysW]-lysine/[LysW]-ornithine hydrolase from Saccharolobus islandicus (strain M.16.4 / Kamchatka #3) (Sulfolobus islandicus).